Here is a 424-residue protein sequence, read N- to C-terminus: Kynureninase (424 aa).

Pyridoxal 5'-phosphate contacts are provided by residues leucine 106, threonine 107, 134–137, aspartate 219, histidine 222, and tyrosine 244; that span reads FPSD. N6-(pyridoxal phosphate)lysine is present on lysine 245. The pyridoxal 5'-phosphate site is built by tryptophan 274 and asparagine 302.

This sequence belongs to the kynureninase family. As to quaternary structure, homodimer. Requires pyridoxal 5'-phosphate as cofactor.

It carries out the reaction L-kynurenine + H2O = anthranilate + L-alanine + H(+). The catalysed reaction is 3-hydroxy-L-kynurenine + H2O = 3-hydroxyanthranilate + L-alanine + H(+). It functions in the pathway amino-acid degradation; L-kynurenine degradation; L-alanine and anthranilate from L-kynurenine: step 1/1. The protein operates within cofactor biosynthesis; NAD(+) biosynthesis; quinolinate from L-kynurenine: step 2/3. Its function is as follows. Catalyzes the cleavage of L-kynurenine (L-Kyn) and L-3-hydroxykynurenine (L-3OHKyn) into anthranilic acid (AA) and 3-hydroxyanthranilic acid (3-OHAA), respectively. This is Kynureninase from Xanthomonas campestris pv. campestris (strain B100).